Here is a 185-residue protein sequence, read N- to C-terminus: MIQAGDFRKGTTFEMDGDVWQIIDFQHVKPGKGAAFVRTKIRSVMTGSNRDMTFNPNEKYEEARIETREMQYLYNDGTLYYFMDPDSYEQLPIDKASVEEAILYIKENDMATIKFFKGKAFQVSPPNFVELEITQTEPGIKGNTATGATKPATVETGATVNVPLFVNEGDKIKIDTRTGEYLSRV.

The protein belongs to the elongation factor P family.

Its subcellular location is the cytoplasm. It functions in the pathway protein biosynthesis; polypeptide chain elongation. Involved in peptide bond synthesis. Stimulates efficient translation and peptide-bond synthesis on native or reconstituted 70S ribosomes in vitro. Probably functions indirectly by altering the affinity of the ribosome for aminoacyl-tRNA, thus increasing their reactivity as acceptors for peptidyl transferase. The chain is Elongation factor P from Finegoldia magna (strain ATCC 29328 / DSM 20472 / WAL 2508) (Peptostreptococcus magnus).